Consider the following 239-residue polypeptide: Putative 3-methyladenine DNA glycosylase (239 aa).

The protein belongs to the DNA glycosylase MPG family.

This is Putative 3-methyladenine DNA glycosylase from Pseudomonas aeruginosa (strain LESB58).